The sequence spans 255 residues: 5-oxoprolinase subunit A (255 aa).

It belongs to the LamB/PxpA family. Forms a complex composed of PxpA, PxpB and PxpC.

The enzyme catalyses 5-oxo-L-proline + ATP + 2 H2O = L-glutamate + ADP + phosphate + H(+). Catalyzes the cleavage of 5-oxoproline to form L-glutamate coupled to the hydrolysis of ATP to ADP and inorganic phosphate. This chain is 5-oxoprolinase subunit A, found in Rhodopseudomonas palustris (strain BisB18).